We begin with the raw amino-acid sequence, 467 residues long: Light-independent protochlorophyllide reductase subunit N (467 aa).

[4Fe-4S] cluster is bound by residues cysteine 24, cysteine 49, and cysteine 109.

This sequence belongs to the BchN/ChlN family. Protochlorophyllide reductase is composed of three subunits; ChlL, ChlN and ChlB. Forms a heterotetramer of two ChlB and two ChlN subunits. [4Fe-4S] cluster serves as cofactor.

The enzyme catalyses chlorophyllide a + oxidized 2[4Fe-4S]-[ferredoxin] + 2 ADP + 2 phosphate = protochlorophyllide a + reduced 2[4Fe-4S]-[ferredoxin] + 2 ATP + 2 H2O. Its pathway is porphyrin-containing compound metabolism; chlorophyll biosynthesis (light-independent). Component of the dark-operative protochlorophyllide reductase (DPOR) that uses Mg-ATP and reduced ferredoxin to reduce ring D of protochlorophyllide (Pchlide) to form chlorophyllide a (Chlide). This reaction is light-independent. The NB-protein (ChlN-ChlB) is the catalytic component of the complex. This Leptolyngbya boryana (Plectonema boryanum) protein is Light-independent protochlorophyllide reductase subunit N.